A 1432-amino-acid polypeptide reads, in one-letter code: uncharacterized protein (1432 aa).

9 disordered regions span residues 1–72 (MDTI…NYYN), 208–237 (NKIE…NNGQ), 280–335 (ERNE…ENNL), 531–607 (IVKS…NNSS), 690–712 (QNKS…TTTT), 738–801 (NNTL…NGGR), 896–950 (QSNN…SPPT), 1044–1076 (NINS…NNNN), and 1303–1359 (NNNN…NTTP). Composition is skewed to low complexity over residues 14–72 (INNN…NYYN), 208–225 (NKIE…NNEN), and 284–300 (LTSP…LPSS). Residues 315–325 (QEEEEEEEEED) show a composition bias toward acidic residues. 5 stretches are compositionally biased toward low complexity: residues 536 to 575 (SSSN…NKNK), 583 to 607 (DNNT…NNSS), 691 to 712 (NKSP…TTTT), 744 to 779 (NMNN…NSNN), and 896 to 944 (QSNN…SSSN). Over residues 1311–1320 (NGNGNGGING) the composition is skewed to gly residues. Over residues 1321–1333 (NNGNNSGSNNKEN) the composition is skewed to low complexity. Positions 1334 to 1346 (GGTGAGIGGGGGL) are enriched in gly residues. Residues 1347-1359 (QLPNNNNNNNTTP) show a composition bias toward low complexity.

This is an uncharacterized protein from Dictyostelium discoideum (Social amoeba).